Reading from the N-terminus, the 718-residue chain is MAEFEKSISFDGRDIRLKVGLLAPQAGGSVLIESGDTAVLVTATRSAGREGIDFLPLTVDYEERLYAAGRIPGGIMRREGRPPEKTILTSRLIDRPLRPLFPSWLRDDLQIVALTMSMDEQVPPDVLAVTGASIATLIAKIPFNGPMAAVRVGLVGDDFIINPTYAEIEAGDLDLVVAGSPHGVIMVEAGANQLPERDIIEAIDFGYEAVRDLIKAQLDLVAELGLEIVQEAPPEVDQTLENYIRDRASDEIKKILAQFELTKPERDAALDVVKDNIATAIAELPEEDPIRLAATANSKALGNTFKDITKYFMRRQIVEDNVRVDGRKLDQVRPVSSQVGVLPKRVHGSGLFNRGLTQVLSACTLGTPGDAQNLNDDLQTDQSKRYLHHYNFPPFSVGETKPLRAPGRREIGHGALAERAILPVLPPKEQFPYVIRVVSEVLSSNGSTSMGSVCGSTLALMDAGVPILKPVSGAAMGLIKEGDEVRVLTDIQGIEDFLGDMDFKVAGTDAGITALQMDMKISGLSLEVIAQAIHQAKDARLHILDKMLQTIDTPRTETSPYAPRLLTIKIDPDMIGLVIGPGGKTIKGITEETGAKIDIEDDGTVTISAVDENKAKRARNIVQGMTRKLNEGDVYAGRVTRIIPIGAFVEFLPGKEGMIHISQLADYRVGKVEDEVAVGDEVIVKVREIDNKGRINLTRLGIHPDQAAAAREAAAVNR.

Mg(2+) is bound by residues aspartate 496 and aspartate 502. Residues 563-622 (PRLLTIKIDPDMIGLVIGPGGKTIKGITEETGAKIDIEDDGTVTISAVDENKAKRARNIV) enclose the KH domain. In terms of domain architecture, S1 motif spans 632–700 (GDVYAGRVTR…NKGRINLTRL (69 aa)).

Belongs to the polyribonucleotide nucleotidyltransferase family. Mg(2+) serves as cofactor.

The protein localises to the cytoplasm. The catalysed reaction is RNA(n+1) + phosphate = RNA(n) + a ribonucleoside 5'-diphosphate. Its function is as follows. Involved in mRNA degradation. Catalyzes the phosphorolysis of single-stranded polyribonucleotides processively in the 3'- to 5'-direction. This Trichormus variabilis (strain ATCC 29413 / PCC 7937) (Anabaena variabilis) protein is Polyribonucleotide nucleotidyltransferase.